A 77-amino-acid polypeptide reads, in one-letter code: Delta/omega-plectoxin-Pt1a (77 aa).

Residues 1-20 form the signal peptide; it reads MKHLIVAVVLLSALAICTSA. A propeptide spanning residues 21 to 34 is cleaved from the precursor; that stretch reads EEEQVNVPFRPEER. Disulfide bonds link Cys38/Cys51, Cys45/Cys57, Cys50/Cys67, Cys54/Cys74, and Cys59/Cys65. A lipid anchor (O-palmitoyl serine) is attached at Ser73. Cys74 is subject to Cysteine amide.

It belongs to the neurotoxin 02 (plectoxin) family. 01 (Tx3) subfamily. In terms of tissue distribution, expressed by the venom gland.

The protein resides in the secreted. Its function is as follows. Excitatory toxin that acts on both calcium and sodium (Nav) channels. It preferentially blocks a subset of calcium channels that is apparently not required for neurotransmitter release, it decreases threshold for sodium channel activation and it slows sodium channel inactivation. As it enhances synaptic transmission by prolonging presynaptic release of neurotransmitter, its effects on sodium and calcium channels may act synergistically to sustain the terminal excitability. In Plectreurys tristis (Spider), this protein is Delta/omega-plectoxin-Pt1a.